The following is a 1434-amino-acid chain: Probable ATP-dependent RNA helicase spindle-E (1434 aa).

The region spanning 125–292 (LAAINAHPVI…FATTNSIPPV (168 aa)) is the Helicase ATP-binding domain. ATP is bound at residue 138 to 145 (GETGCGKT). A DEAH box motif is present at residues 238-241 (DEVH). The region spanning 339-526 (KIIVIIDNME…NSVLKAKVLN (188 aa)) is the Helicase C-terminal domain. The Tudor domain maps to 938 to 1001 (AGDITKGMMV…RLMPRELTEQ (64 aa)).

This sequence belongs to the DEAD box helicase family. DEAH subfamily.

Its subcellular location is the cytoplasm. It carries out the reaction ATP + H2O = ADP + phosphate + H(+). Functionally, probable ATP-binding RNA helicase which plays a central role during spermatogenesis and oogenesis by repressing transposable elements and preventing their mobilization, which is essential for the germline integrity. Acts via the piRNA metabolic process, which mediates the repression of transposable elements during meiosis by forming complexes composed of piRNAs and Piwi and govern the methylation and subsequent repression of transposons. Involved in the repression of LTR retrotransposon copia. Also involved in telomere regulation by repressing specialized telomeric retroelements HeT-A, TAHRE, and TART; Drosophila telomeres being maintained by transposition of specialized telomeric retroelements. Involved in telomeric trans-silencing, a repression mechanism by which a transposon or a transgene inserted in subtelomeric heterochromatin has the capacity to repress in trans in the female germline, a homologous transposon, or transgene located in euchromatin. Involved in the repression of testis-expressed Stellate genes by the homologous Su(Ste) repeats. Required for anteroposterior and dorsoventral axis formation during oogenesis. This is Probable ATP-dependent RNA helicase spindle-E (spn-E) from Drosophila sechellia (Fruit fly).